The chain runs to 552 residues: uncharacterized protein (552 aa).

Belongs to the transposase 25 family.

This is an uncharacterized protein from Sinorhizobium fredii (strain NBRC 101917 / NGR234).